We begin with the raw amino-acid sequence, 500 residues long: Nuclear distribution protein PAC1 (500 aa).

WD repeat units follow at residues 125–164, 169–219, 225–265, 268–310, 338–378, 397–436, and 459–500; these read HNGH…EPQQ, AHTR…NLKA, GHEN…IVLS, GHSN…LMIG, QNEL…IRSD, EHKS…ESNL, and IKDQ…EYIL.

Belongs to the WD repeat LIS1/nudF family. Self-associates. Interacts with NDL1 and dynein.

The protein localises to the cytoplasm. The protein resides in the cytoskeleton. Its subcellular location is the spindle pole. Functionally, positively regulates the activity of the minus-end directed microtubule motor protein dynein. Plays a central role in positioning the mitotic spindle at the bud neck during cell division. Targets cytoplasmic dynein to microtubule plus ends, thereby promoting dynein-mediated microtubule sliding along the bud cortex and consequently the movement of the mitotic spindle to the bud neck. The protein is Nuclear distribution protein PAC1 of Komagataella phaffii (strain GS115 / ATCC 20864) (Yeast).